The sequence spans 400 residues: Homoserine O-acetyltransferase (400 aa).

The region spanning 64 to 374 is the AB hydrolase-1 domain; sequence NAILVCHALT…DKGHDAFLLD (311 aa). The active-site Nucleophile is the S169. Position 239 (R239) interacts with substrate. Active-site residues include D335 and H368. D369 is a binding site for substrate.

It belongs to the AB hydrolase superfamily. MetX family. As to quaternary structure, homodimer.

The protein localises to the cytoplasm. It catalyses the reaction L-homoserine + acetyl-CoA = O-acetyl-L-homoserine + CoA. It participates in amino-acid biosynthesis; L-methionine biosynthesis via de novo pathway; O-acetyl-L-homoserine from L-homoserine: step 1/1. Functionally, transfers an acetyl group from acetyl-CoA to L-homoserine, forming acetyl-L-homoserine. The sequence is that of Homoserine O-acetyltransferase from Rhodopseudomonas palustris (strain ATCC BAA-98 / CGA009).